A 242-amino-acid polypeptide reads, in one-letter code: NH(3)-dependent NAD(+) synthetase (242 aa).

An ATP-binding site is contributed by 27–34 (GISGGIDS). Mg(2+) is bound at residue Asp-33. Position 109 (Arg-109) interacts with deamido-NAD(+). Thr-129 contributes to the ATP binding site. Glu-134 lines the Mg(2+) pocket. Residues Lys-142 and Asp-149 each coordinate deamido-NAD(+). ATP contacts are provided by Lys-158 and Thr-180. Deamido-NAD(+) is bound at residue 231 to 232 (HK).

This sequence belongs to the NAD synthetase family. Homodimer.

The catalysed reaction is deamido-NAD(+) + NH4(+) + ATP = AMP + diphosphate + NAD(+) + H(+). It functions in the pathway cofactor biosynthesis; NAD(+) biosynthesis; NAD(+) from deamido-NAD(+) (ammonia route): step 1/1. Its function is as follows. Catalyzes the ATP-dependent amidation of deamido-NAD to form NAD. Uses ammonia as a nitrogen source. The polypeptide is NH(3)-dependent NAD(+) synthetase (Thermoplasma volcanium (strain ATCC 51530 / DSM 4299 / JCM 9571 / NBRC 15438 / GSS1)).